The primary structure comprises 142 residues: ATP synthase epsilon chain (142 aa).

This sequence belongs to the ATPase epsilon chain family. As to quaternary structure, F-type ATPases have 2 components, CF(1) - the catalytic core - and CF(0) - the membrane proton channel. CF(1) has five subunits: alpha(3), beta(3), gamma(1), delta(1), epsilon(1). CF(0) has three main subunits: a, b and c.

The protein resides in the cell inner membrane. Produces ATP from ADP in the presence of a proton gradient across the membrane. The protein is ATP synthase epsilon chain of Shewanella loihica (strain ATCC BAA-1088 / PV-4).